Reading from the N-terminus, the 441-residue chain is Signal recognition particle 54 kDa protein (441 aa).

GTP-binding positions include Gly-104–Thr-111, Asp-186–Arg-190, and Thr-244–Asp-247.

The protein belongs to the GTP-binding SRP family. SRP54 subfamily. In terms of assembly, part of the signal recognition particle protein translocation system, which is composed of SRP and FtsY. Archaeal SRP consists of a 7S RNA molecule of 300 nucleotides and two protein subunits: SRP54 and SRP19.

The protein resides in the cytoplasm. It carries out the reaction GTP + H2O = GDP + phosphate + H(+). Its function is as follows. Involved in targeting and insertion of nascent membrane proteins into the cytoplasmic membrane. Binds to the hydrophobic signal sequence of the ribosome-nascent chain (RNC) as it emerges from the ribosomes. The SRP-RNC complex is then targeted to the cytoplasmic membrane where it interacts with the SRP receptor FtsY. This chain is Signal recognition particle 54 kDa protein, found in Staphylothermus marinus (strain ATCC 43588 / DSM 3639 / JCM 9404 / F1).